The sequence spans 262 residues: MSDDNSIASMAARLREAQASGRTIAPLRDTCPGGDATLAYAIQQINNDLRKTNGERVVGRKIGLTSPAVQKQLGVDQPDFGALFASMAYGDGEPMPLASLIQPKVEAEIALVLERDLTAEKHTFADLISATAYAVAAIEVVDSRIRDWDIRFFDTVADNASSALFVLGSRPVLLRDIDLTACAMTLAQDGEVLSRGNGAACLGNPLNAAAWLADRMVRLGTPLRAGDVVLTGALGPMVAVKAAGTYAAHIDGLGSVRATFTE.

It belongs to the hydratase/decarboxylase family. MhpD subfamily. It depends on a divalent metal cation as a cofactor.

The catalysed reaction is (S)-4-hydroxy-2-oxopentanoate = (2Z)-2-hydroxypenta-2,4-dienoate + H2O. It functions in the pathway aromatic compound metabolism; 3-phenylpropanoate degradation. Functionally, catalyzes the conversion of 2-hydroxypentadienoic acid (enolic form of 2-oxopent-4-enoate) to 4-hydroxy-2-ketopentanoic acid. This chain is 2-keto-4-pentenoate hydratase, found in Burkholderia vietnamiensis (strain G4 / LMG 22486) (Burkholderia cepacia (strain R1808)).